The following is a 404-amino-acid chain: Probable protein phosphatase 2C 30 (404 aa).

The segment covering 42-52 (AERGAEEETSG) has biased composition (basic and acidic residues). The interval 42–72 (AERGAEEETSGKRRRLDGGGGEASTDEEDRE) is disordered. Positions 77 to 399 (RYGFTSVCGR…DNVSVVVVNL (323 aa)) constitute a PPM-type phosphatase domain. The Mn(2+) site is built by D111, G112, and D298. Residues 321–369 (GRRERNRSSPTSNLSPRQSSSSGDEAPNDGAPSAAAGSESDEESAAEED) are disordered. Positions 330-343 (PTSNLSPRQSSSSG) are enriched in polar residues. Residue D390 participates in Mn(2+) binding.

This sequence belongs to the PP2C family. In terms of assembly, interacts with PYL5 and SAPK2. Binding to PYL5 is dependent on the presence of abscisic acid (ABA). Interacts with PYL3, PYL5 and PYL9. Binding to PYL5 and PYL9 is dependent on the presence of ABA. Mg(2+) serves as cofactor. Mn(2+) is required as a cofactor.

It is found in the nucleus. The catalysed reaction is O-phospho-L-seryl-[protein] + H2O = L-seryl-[protein] + phosphate. It carries out the reaction O-phospho-L-threonyl-[protein] + H2O = L-threonyl-[protein] + phosphate. In terms of biological role, together with ABI5, PYL5 and SAPK2, is part of an abscisic acid (ABA) signaling unit that modulates seed germination and early seedling growth. This Oryza sativa subsp. japonica (Rice) protein is Probable protein phosphatase 2C 30.